A 380-amino-acid chain; its full sequence is Cytochrome b (380 aa).

4 helical membrane-spanning segments follow: residues F34 to M54, W78 to I99, W114 to L134, and F179 to L199. Heme b contacts are provided by H84 and H98. H183 provides a ligand contact to heme b. H202 is an a ubiquinone binding site. Helical transmembrane passes span Y227 to A247, L289 to H309, I321 to G341, and F348 to P368.

The protein belongs to the cytochrome b family. In terms of assembly, the cytochrome bc1 complex contains 3 respiratory subunits (MT-CYB, CYC1 and UQCRFS1), 2 core proteins (UQCRC1 and UQCRC2) and probably 6 low-molecular weight proteins. It depends on heme b as a cofactor.

The protein localises to the mitochondrion inner membrane. Functionally, component of the ubiquinol-cytochrome c reductase complex (complex III or cytochrome b-c1 complex) that is part of the mitochondrial respiratory chain. The b-c1 complex mediates electron transfer from ubiquinol to cytochrome c. Contributes to the generation of a proton gradient across the mitochondrial membrane that is then used for ATP synthesis. In Pelophylax plancyi (Korean pond frog), this protein is Cytochrome b (mt-cyb).